The primary structure comprises 118 residues: Beta-2-microglobulin (118 aa).

A signal peptide spans 1 to 21; it reads MGSRWGIAVLGLFCFVSCLEA. The region spanning 26 to 113 is the Ig-like C1-type domain; that stretch reads PKIQVYSRHP…VHEGVKKTVK (88 aa). Cys-46 and Cys-101 are joined by a disulfide.

It belongs to the beta-2-microglobulin family. As to quaternary structure, heterodimer of an alpha chain and a beta chain. Beta-2-microglobulin is the beta-chain of major histocompatibility complex class I molecules.

Its subcellular location is the secreted. In terms of biological role, component of the class I major histocompatibility complex (MHC). Involved in the presentation of peptide antigens to the immune system. The chain is Beta-2-microglobulin (B2M) from Ornithorhynchus anatinus (Duckbill platypus).